An 85-amino-acid chain; its full sequence is Large ribosomal subunit protein bL27 (85 aa).

A disordered region spans residues 1 to 20; that stretch reads MAHKKAGGSTRNGRDSESKR.

The protein belongs to the bacterial ribosomal protein bL27 family.

The chain is Large ribosomal subunit protein bL27 from Azotobacter vinelandii (strain DJ / ATCC BAA-1303).